A 210-amino-acid chain; its full sequence is Peroxynitrite isomerase (210 aa).

A GXWXGXG motif is present at residues 21–27; it reads GQWEGQG. His-190 serves as a coordination point for heme b.

The protein belongs to the nitrobindin family. In terms of assembly, homodimer. Heme b serves as cofactor.

The enzyme catalyses peroxynitrite = nitrate. The protein operates within nitrogen metabolism. Its function is as follows. Heme-binding protein able to scavenge peroxynitrite and to protect free L-tyrosine against peroxynitrite-mediated nitration, by acting as a peroxynitrite isomerase that converts peroxynitrite to nitrate. Therefore, this protein likely plays a role in peroxynitrite sensing and in the detoxification of reactive nitrogen and oxygen species (RNS and ROS, respectively). Is able to bind nitric oxide (NO) in vitro, but may act as a sensor of peroxynitrite levels in vivo. The chain is Peroxynitrite isomerase from Renibacterium salmoninarum (strain ATCC 33209 / DSM 20767 / JCM 11484 / NBRC 15589 / NCIMB 2235).